The following is a 127-amino-acid chain: UPF0102 protein Reut_A3265 (127 aa).

The protein belongs to the UPF0102 family.

This chain is UPF0102 protein Reut_A3265, found in Cupriavidus pinatubonensis (strain JMP 134 / LMG 1197) (Cupriavidus necator (strain JMP 134)).